Here is a 271-residue protein sequence, read N- to C-terminus: Acetyl-coenzyme A carboxylase carboxyl transferase subunit alpha (271 aa).

The region spanning 1-247 (MSRELIRTAD…KKTILEALGE (247 aa)) is the CoA carboxyltransferase C-terminal domain.

It belongs to the AccA family. In terms of assembly, acetyl-CoA carboxylase is a heterohexamer composed of biotin carboxyl carrier protein (AccB), biotin carboxylase (AccC) and two subunits each of ACCase subunit alpha (AccA) and ACCase subunit beta (AccD).

Its subcellular location is the cytoplasm. The enzyme catalyses N(6)-carboxybiotinyl-L-lysyl-[protein] + acetyl-CoA = N(6)-biotinyl-L-lysyl-[protein] + malonyl-CoA. It functions in the pathway lipid metabolism; malonyl-CoA biosynthesis; malonyl-CoA from acetyl-CoA: step 1/1. In terms of biological role, component of the acetyl coenzyme A carboxylase (ACC) complex. First, biotin carboxylase catalyzes the carboxylation of biotin on its carrier protein (BCCP) and then the CO(2) group is transferred by the carboxyltransferase to acetyl-CoA to form malonyl-CoA. This chain is Acetyl-coenzyme A carboxylase carboxyl transferase subunit alpha, found in Clostridium perfringens (strain ATCC 13124 / DSM 756 / JCM 1290 / NCIMB 6125 / NCTC 8237 / Type A).